The sequence spans 468 residues: Trehalose-binding lipoprotein LpqY (468 aa).

The signal sequence occupies residues 1-25 (MVMSRGRIPRLGAAVLVALTTAAAA). Cysteine 26 carries N-palmitoyl cysteine lipidation. Cysteine 26 is lipidated: S-diacylglycerol cysteine. A disulfide bond links cysteine 54 and cysteine 372. Alpha,alpha-trehalose contacts are provided by aspartate 97, asparagine 151, tryptophan 276, phenylalanine 278, glycine 351, and arginine 421.

The protein belongs to the bacterial solute-binding protein 1 family. In terms of assembly, monomer. The complex is composed of two ATP-binding proteins (SugC), two transmembrane proteins (SugA and SugB) and a solute-binding protein (LpqY).

The protein localises to the cell inner membrane. In terms of biological role, part of the ABC transporter complex LpqY-SugA-SugB-SugC, which is highly specific for uptake of trehalose. Involved in the recycling of extracellular trehalose released from trehalose-containing molecules synthesized by M.tuberculosis. Trehalose uptake is essential for virulence. This Mycobacterium tuberculosis (strain CDC 1551 / Oshkosh) protein is Trehalose-binding lipoprotein LpqY (lpqY).